The chain runs to 122 residues: Small ribosomal subunit protein uS13 (122 aa).

Residues 97-122 (PVRGQRTHTNARTRKGPAKAIAGKKK) form a disordered region.

Belongs to the universal ribosomal protein uS13 family. In terms of assembly, part of the 30S ribosomal subunit. Forms a loose heterodimer with protein S19. Forms two bridges to the 50S subunit in the 70S ribosome.

Its function is as follows. Located at the top of the head of the 30S subunit, it contacts several helices of the 16S rRNA. In the 70S ribosome it contacts the 23S rRNA (bridge B1a) and protein L5 of the 50S subunit (bridge B1b), connecting the 2 subunits; these bridges are implicated in subunit movement. Contacts the tRNAs in the A and P-sites. This is Small ribosomal subunit protein uS13 from Bartonella henselae (strain ATCC 49882 / DSM 28221 / CCUG 30454 / Houston 1) (Rochalimaea henselae).